Here is a 104-residue protein sequence, read N- to C-terminus: Large ribosomal subunit protein eL30 (104 aa).

Belongs to the eukaryotic ribosomal protein eL30 family.

This is Large ribosomal subunit protein eL30 (RPL30) from Leishmania major.